A 944-amino-acid chain; its full sequence is snRNA-activating protein complex subunit 4 homolog (944 aa).

The tract at residues 1-22 (MSDLVMFEPGASTSTDVPTNTD) is disordered. The segment covering 11–22 (ASTSTDVPTNTD) has biased composition (polar residues). One can recognise a Myb-like 1 domain in the interval 177–244 (TSNFDRRQWT…AVKSKWYNEL (68 aa)). The 57-residue stretch at 245-301 (NPKWNKEHWSNEEVEKLKYLRESPKFVSWPMLALNLGTNRTSYQCMEKYKTEVSQHS) folds into the HTH myb-type 1 domain. A DNA-binding region (H-T-H motif) is located at residues 273-297 (WPMLALNLGTNRTSYQCMEKYKTEV). A Myb-like 2 domain is found at 304 to 350 (WSQDEDTKLIALTKITSINGHIQWDKVAQCMPGRTRQQVRTRFSHTL). 2 HTH myb-type domains span residues 351 to 406 (DASV…NRSA) and 407 to 459 (HVNE…AAKL). 2 consecutive DNA-binding regions (H-T-H motif) follow at residues 379-402 (WAKV…TNVL) and 432-455 (WAKC…LQLI). Low complexity predominate over residues 911–921 (ARPARPPRSSA). A disordered region spans residues 911–935 (ARPARPPRSSAGTPTPSHVSIDTES). Polar residues predominate over residues 922-935 (GTPTPSHVSIDTES).

Broadly expressed in all tissues, including head, vulva and tail.

Its subcellular location is the nucleus. Binds to the promoter regions of RNA polymerase II and III small-nuclear RNA genes, type 3 RNA polymerase III non-coding RNA genes, small nucleolar RNAs and transfer RNA genes. Required for expression of mature 21U-RNAs. The polypeptide is snRNA-activating protein complex subunit 4 homolog (Caenorhabditis elegans).